Consider the following 289-residue polypeptide: MKDYLIKATANNGKIRAYAVQSTNTIEEARRRQDTFATASAALGRTITITAMMGAMLKGDDSITTKVMGNGPLGAIVADADADGHVRGYVTNPHVDFDLNDKGKLDVARAVGTEGNISVIKDLGLKDFFTGETPIVSGEISEDFTYYYATSEQLPSAVGAGVLVNPDHTILAAGGFIVQVMPGAEEEVINELEDQIQAIPAISSLIREGKSPEEILTQLFGEECLTIHEKMPIEFRCKCSKDRLAQAIIGLGNDEIQAMIEEDQGAEATCHFCNEKYHFTEEELEDLKQ.

2 disulfides stabilise this stretch: cysteine 237–cysteine 239 and cysteine 270–cysteine 273.

This sequence belongs to the HSP33 family. Under oxidizing conditions two disulfide bonds are formed involving the reactive cysteines. Under reducing conditions zinc is bound to the reactive cysteines and the protein is inactive.

Its subcellular location is the cytoplasm. In terms of biological role, redox regulated molecular chaperone. Protects both thermally unfolding and oxidatively damaged proteins from irreversible aggregation. Plays an important role in the bacterial defense system toward oxidative stress. The protein is 33 kDa chaperonin of Oceanobacillus iheyensis (strain DSM 14371 / CIP 107618 / JCM 11309 / KCTC 3954 / HTE831).